The following is a 113-amino-acid chain: uncharacterized protein (113 aa).

The disordered stretch occupies residues 78–113 (YCNRGSERTNQGNRGSAPSKILLPRTIADPFRGGPE).

This is an uncharacterized protein from Halobacterium phage phiH (Bacteriophage phi-H).